The sequence spans 132 residues: MVMTDPIADMLTRIRNANIARHETVEIPASNMKRAIAMIMLKEGFIKSVEEIDDGKGGILKLTLKYGPNKERVISGLKRISKPGLRVYARHDELPRVLGGLGIAIISTSKGIMTDKEARKAGVGGEVICYIW.

Belongs to the universal ribosomal protein uS8 family. As to quaternary structure, part of the 30S ribosomal subunit. Contacts proteins S5 and S12.

In terms of biological role, one of the primary rRNA binding proteins, it binds directly to 16S rRNA central domain where it helps coordinate assembly of the platform of the 30S subunit. This Thermoanaerobacter pseudethanolicus (strain ATCC 33223 / 39E) (Clostridium thermohydrosulfuricum) protein is Small ribosomal subunit protein uS8.